A 131-amino-acid chain; its full sequence is Profilin-10 (131 aa).

Cys-13 and Cys-115 are joined by a disulfide. The Involved in PIP2 interaction signature appears at 81 to 97; the sequence is AVIRGKKGSGGITVKKT. Thr-111 carries the post-translational modification Phosphothreonine.

It belongs to the profilin family. Occurs in many kinds of cells as a complex with monomeric actin in a 1:1 ratio. Post-translationally, phosphorylated by MAP kinases.

It is found in the cytoplasm. Its subcellular location is the cytoskeleton. Functionally, binds to actin and affects the structure of the cytoskeleton. At high concentrations, profilin prevents the polymerization of actin, whereas it enhances it at low concentrations. The chain is Profilin-10 from Zea mays (Maize).